The chain runs to 127 residues: RxLR effector protein CRE6 (127 aa).

An N-terminal signal peptide occupies residues 1–19 (MIRNALLVLVFVLIGTISA). The RxLR-dEER signature appears at 48–67 (RLLRQGSVKEGGVHDATEER).

This sequence belongs to the RxLR effector family.

The protein localises to the secreted. Its subcellular location is the host cell. Its function is as follows. Effector that is involved in host plant infection. Contributes to virulence during the early infection stage, by inhibiting plant defense responses induced by both PAMP-triggered immunity (PTI) and effector-triggered immunity (ETI). This chain is RxLR effector protein CRE6, found in Phytophthora infestans (strain T30-4) (Potato late blight agent).